The primary structure comprises 213 residues: Protein FAM177A1 (213 aa).

Met-1 carries the N-acetylmethionine modification. A Phosphoserine modification is found at Ser-70. Residue Thr-71 is modified to Phosphothreonine. Residues 136–173 (IDEYYRMKKEEEEEEEENRMSEEAEKQYQQNKLQTDSI) are a coiled coil. Residues 147 to 175 (EEEEEENRMSEEAEKQYQQNKLQTDSIVQ) form a disordered region. Positions 162-175 (QYQQNKLQTDSIVQ) are enriched in polar residues.

The protein belongs to the FAM177 family.

The sequence is that of Protein FAM177A1 (FAM177A1) from Homo sapiens (Human).